Here is a 279-residue protein sequence, read N- to C-terminus: Ankyrin repeat domain-containing protein 7 (279 aa).

Residues 1–11 (MKKFFPFRGKR) are compositionally biased toward basic residues. The disordered stretch occupies residues 1 to 25 (MKKFFPFRGKRKTDDSHSHSSEVPI). ANK repeat units follow at residues 80 to 109 (RSRT…KINV), 113 to 142 (ENRT…DPNL), 146 to 175 (YSNT…NLEA), 179 to 208 (DGHT…DVNA), and 212 to 241 (NHRT…DLAH).

The protein is Ankyrin repeat domain-containing protein 7 (Ankrd7) of Mus musculus (Mouse).